The primary structure comprises 499 residues: Protein adenylyltransferase Fic (499 aa).

A helical membrane pass occupies residues 38 to 58 (FHYFVIFASGSLFSGLMFGLL). TPR repeat units follow at residues 126–159 (ALSS…SPKH) and 160–194 (PEIL…NPSH). The Inhibitory (S/T)XXXE(G/N) motif motif lies at 251 to 256 (SVGIEG). ATP contacts are provided by residues Glu-255 and 337-340 (VGGH). One can recognise a Fido domain in the interval 306–441 (ITLKDILEIH…IRPFVRFIAD (136 aa)). Residue His-384 is part of the active site. ATP-binding positions include 388–395 (DGNGRTSR), 420–421 (YY), and Asn-428.

It belongs to the fic family. As to quaternary structure, homodimer.

It localises to the membrane. It carries out the reaction L-tyrosyl-[protein] + ATP = O-(5'-adenylyl)-L-tyrosyl-[protein] + diphosphate. The enzyme catalyses L-threonyl-[protein] + ATP = 3-O-(5'-adenylyl)-L-threonyl-[protein] + diphosphate. The catalysed reaction is 3-O-(5'-adenylyl)-L-threonyl-[protein] + H2O = L-threonyl-[protein] + AMP + H(+). The side chain of Glu-255 determines which of the two opposing activities (AMPylase or de-AMPylase) will take place. In response to endoplasmic reticulum stress, mediates de-AMPylase activity. Adenylyltransferase activity is inhibited by the inhibitory helix present at the N-terminus: Glu-255 binds ATP and competes with ATP-binding at Arg-395, thereby preventing adenylyltransferase activity. In unstressed cells, disengagement of Glu-255 promotes adenylyltransferase activity. Activation dissociates ATP-binding from Glu-255, allowing ordered binding of the entire ATP moiety with the alpha-phosphate in an orientation that is productive for accepting an incoming target hydroxyl side chain. Its function is as follows. Protein that can both mediate the addition of adenosine 5'-monophosphate (AMP) to specific residues of target proteins (AMPylation), and the removal of the same modification from target proteins (de-AMPylation), depending on the context. The side chain of Glu-255 determines which of the two opposing activities (AMPylase or de-AMPylase) will take place. Acts as a key regulator of the unfolded protein response (UPR) by mediating AMPylation or de-AMPylation of Hsc70-3/BiP. In unstressed cells, acts as an adenylyltransferase by mediating AMPylation of Hsc70-3/BiP at 'Thr-518', thereby inactivating it. In response to endoplasmic reticulum stress, acts as a phosphodiesterase by mediating removal of ATP (de-AMPylation) from Hsc70-3/BiP at 'Thr-518', leading to restore HSPA5/BiP activity. The protein is Protein adenylyltransferase Fic of Aedes aegypti (Yellowfever mosquito).